The sequence spans 432 residues: 3-phosphoshikimate 1-carboxyvinyltransferase (432 aa).

Positions 23, 24, and 28 each coordinate 3-phosphoshikimate. K23 serves as a coordination point for phosphoenolpyruvate. Phosphoenolpyruvate contacts are provided by G95 and R123. Positions 167, 169, 317, and 344 each coordinate 3-phosphoshikimate. A phosphoenolpyruvate-binding site is contributed by Q169. D317 functions as the Proton acceptor in the catalytic mechanism. R348 and R390 together coordinate phosphoenolpyruvate.

The protein belongs to the EPSP synthase family. As to quaternary structure, monomer.

It is found in the cytoplasm. It carries out the reaction 3-phosphoshikimate + phosphoenolpyruvate = 5-O-(1-carboxyvinyl)-3-phosphoshikimate + phosphate. Its pathway is metabolic intermediate biosynthesis; chorismate biosynthesis; chorismate from D-erythrose 4-phosphate and phosphoenolpyruvate: step 6/7. Catalyzes the transfer of the enolpyruvyl moiety of phosphoenolpyruvate (PEP) to the 5-hydroxyl of shikimate-3-phosphate (S3P) to produce enolpyruvyl shikimate-3-phosphate and inorganic phosphate. This is 3-phosphoshikimate 1-carboxyvinyltransferase from Staphylococcus aureus (strain COL).